We begin with the raw amino-acid sequence, 252 residues long: Proteasome subunit alpha type-7-1B (252 aa).

This sequence belongs to the peptidase T1A family. In terms of assembly, the 26S proteasome consists of a 20S proteasome core and two 19S regulatory subunits. The 20S proteasome core is composed of 28 subunits that are arranged in four stacked rings, resulting in a barrel-shaped structure. The two end rings are each formed by seven alpha subunits, and the two central rings are each formed by seven beta subunits. The catalytic chamber with the active sites is on the inside of the barrel. In terms of tissue distribution, testis specific.

It is found in the cytoplasm. The protein localises to the nucleus. Its function is as follows. The proteasome is a multicatalytic proteinase complex which is characterized by its ability to cleave peptides with Arg, Phe, Tyr, Leu, and Glu adjacent to the leaving group at neutral or slightly basic pH. The proteasome has an ATP-dependent proteolytic activity. The chain is Proteasome subunit alpha type-7-1B (Prosalpha4T2) from Drosophila melanogaster (Fruit fly).